The sequence spans 121 residues: Large ribosomal subunit protein bL12 (121 aa).

The protein belongs to the bacterial ribosomal protein bL12 family. As to quaternary structure, homodimer. Part of the ribosomal stalk of the 50S ribosomal subunit. Forms a multimeric L10(L12)X complex, where L10 forms an elongated spine to which 2 to 4 L12 dimers bind in a sequential fashion. Binds GTP-bound translation factors.

Forms part of the ribosomal stalk which helps the ribosome interact with GTP-bound translation factors. Is thus essential for accurate translation. In Aliivibrio salmonicida (strain LFI1238) (Vibrio salmonicida (strain LFI1238)), this protein is Large ribosomal subunit protein bL12.